The chain runs to 185 residues: MVQQIINTAKEKMDKAVQAFTRELATIRAGRANPSLLEKVTVDYYGMPTPIIQLASISVPEARLLVIQPYDKSVIKDIEKAILSSDLGLTPSNDGSVIRITIPPLTEERRRELVKLVKKYSEDAKVAVRNIRRDANDELKKLEKNGEITEDELRGYTDDVQKLTDDHIAKIDAITKEKEKEVMEV.

The protein belongs to the RRF family.

It is found in the cytoplasm. Its function is as follows. Responsible for the release of ribosomes from messenger RNA at the termination of protein biosynthesis. May increase the efficiency of translation by recycling ribosomes from one round of translation to another. This is Ribosome-recycling factor from Geobacillus sp. (strain WCH70).